The chain runs to 345 residues: uncharacterized protein (345 aa).

PDZ GRASP-type domains lie at 27-112 and 118-207; these read CGFR…WASI and AIWH…HGVL. The GRASP stretch occupies residues 27 to 223; sequence CGFRVLKVEN…LSGPPPQPGD (197 aa). Positions 229–345 are disordered; that stretch reads PMLGGPDHKV…APQNEELVKN (117 aa). Residues 297–308 show a composition bias toward basic and acidic residues; sequence KLSRELDHKTKD. Polar residues-rich tracts occupy residues 309–318 and 328–338; these read ASSTNDSQTT and VNSTNDESAPQ.

The protein resides in the golgi apparatus membrane. This is an uncharacterized protein from Schizosaccharomyces pombe (strain 972 / ATCC 24843) (Fission yeast).